The sequence spans 249 residues: uncharacterized protein (249 aa).

7-14 lines the ATP pocket; the sequence is GKGGCGKS.

This is an uncharacterized protein from Methanocaldococcus jannaschii (strain ATCC 43067 / DSM 2661 / JAL-1 / JCM 10045 / NBRC 100440) (Methanococcus jannaschii).